Consider the following 633-residue polypeptide: Carbon monoxide dehydrogenase 2 (633 aa).

Cysteine 44, cysteine 53, cysteine 56, cysteine 61, and cysteine 73 together coordinate [4Fe-4S] cluster. Positions 264, 343, 453, 484, and 525 each coordinate [Ni-4Fe-5S] cluster.

Belongs to the Ni-containing carbon monoxide dehydrogenase family. As to quaternary structure, homodimer. [4Fe-4S] cluster is required as a cofactor. [Ni-4Fe-5S] cluster serves as cofactor.

The catalysed reaction is CO + 2 oxidized [2Fe-2S]-[ferredoxin] + H2O = 2 reduced [2Fe-2S]-[ferredoxin] + CO2 + 2 H(+). In terms of biological role, CODH oxidizes carbon monoxide coupled, via CooF, to the reduction of a hydrogen cation by a hydrogenase (possibly CooH). The chain is Carbon monoxide dehydrogenase 2 (cooS2) from Methanosarcina acetivorans (strain ATCC 35395 / DSM 2834 / JCM 12185 / C2A).